Here is a 689-residue protein sequence, read N- to C-terminus: FACT complex subunit ssrp1-B (689 aa).

2 disordered regions span residues 434–565 (DNKS…KRAT) and 592–689 (KAGA…GESD). The span at 461–477 (EQDDDSDDESTDEDYDL) shows a compositional bias: acidic residues. Basic and acidic residues-rich tracts occupy residues 478-491 (DKDM…KDSS), 523-532 (IEPKKKESKE), 538-563 (EKKE…EPKR), and 601-628 (SADD…EYKK). Residues 561–627 (PKRATTAYII…RYEAEMKEYK (67 aa)) constitute a DNA-binding region (HMG box). Over residues 638–650 (GPSTKKSSDQSPG) the composition is skewed to polar residues.

Belongs to the SSRP1 family. As to quaternary structure, component of the FACT complex, a stable heterodimer of hmg-3 and spt-16. The FACT complex may also include hmg-4 instead of hmg-3. Expressed in the germline.

Its subcellular location is the nucleus. The protein localises to the chromosome. Functionally, component of the FACT complex, a general chromatin factor that acts to reorganize nucleosomes. The FACT complex is involved in multiple processes that require DNA as a template such as mRNA elongation, DNA replication and DNA repair. During transcription elongation the FACT complex acts as a histone chaperone that both destabilizes and restores nucleosomal structure. It facilitates the passage of RNA polymerase II and transcription by promoting the dissociation of one histone H2A-H2B dimer from the nucleosome, then subsequently promotes the reestablishment of the nucleosome following the passage of RNA polymerase II. Binds specifically to double-stranded DNA. In embryos, may function redundantly with hmg-4 to promote cell cycle progression and development of the anterior pharynx. In the germline, acts non-redundantly with hmg-4 to play a role in oocyte development. The polypeptide is FACT complex subunit ssrp1-B (Caenorhabditis elegans).